Reading from the N-terminus, the 834-residue chain is Probable receptor-like protein kinase At2g23200 (834 aa).

The first 28 residues, 1–28, serve as a signal peptide directing secretion; it reads MENFCFQDSVSLFITIMVLVLLPRLSLS. Over 29–405 the chain is Extracellular; that stretch reads DTSTYTRPEN…SSSRVHIITG (377 aa). N-linked (GlcNAc...) asparagine glycans are attached at residues N61, N149, N221, N246, N277, N289, N314, N352, N361, and N394. Residues 406 to 426 traverse the membrane as a helical segment; the sequence is CAVAAAAASALVFSLLFMVFL. At 427–834 the chain is on the cytoplasmic side; the sequence is KRRRSKKTKP…FSQLKISDAR (408 aa). The Protein kinase domain maps to 488 to 761; the sequence is FDEQLLIGKG…RDVIWDLEYV (274 aa). ATP-binding positions include 494 to 502 and K516; that span reads IGKGGFGYV. Residue D613 is the Proton acceptor of the active site.

The protein belongs to the protein kinase superfamily. Ser/Thr protein kinase family.

It is found in the membrane. This chain is Probable receptor-like protein kinase At2g23200, found in Arabidopsis thaliana (Mouse-ear cress).